Reading from the N-terminus, the 346-residue chain is fMet-Leu-Phe receptor (346 aa).

Residues Asn-1 and Asn-7 are each glycosylated (N-linked (GlcNAc...) asparagine). Residues 1–24 are Extracellular-facing; the sequence is NSSLPTNISGGTPAVSAGYLFLDI. Residues 25–47 form a helical membrane-spanning segment; sequence ITYLVFAVTFVLGVLGNGLVIWV. The Cytoplasmic portion of the chain corresponds to 48–58; the sequence is AGFRMTHTVTT. Residues 59–80 traverse the membrane as a helical segment; that stretch reads ISYLNLAVADFCFTSTLPFFMV. Residues 81-97 lie on the Extracellular side of the membrane; it reads RKAMGGHWPFGWFLCKF. Cysteines 95 and 173 form a disulfide. A helical membrane pass occupies residues 98 to 118; the sequence is IFTIVDINLFGSVFLIALIAL. Over 119–137 the chain is Cytoplasmic; sequence DRCVCVLHPVWTQNHRTVS. Residues 138 to 159 form a helical membrane-spanning segment; the sequence is LAKKVIIGPWVMALLLTLPVII. The Extracellular segment spans residues 160–202; sequence RVTTVPGKTGTVACTFNFSPWTNDPKERINVAIAMLTVRGIIR. A helical membrane pass occupies residues 203 to 223; sequence FIIGFSAPMSIVAVSYGLIAT. At 224-239 the chain is on the cytoplasmic side; sequence KIHKQGLIKFSRPLRV. Residues 240 to 263 traverse the membrane as a helical segment; that stretch reads LSFVAAAFFLCWSPYQVVALIATV. The Extracellular segment spans residues 264–282; the sequence is RIRELLQGMYKEIGIAVDV. Residues 283–302 form a helical membrane-spanning segment; it reads TSALAFFNSCLNPMLYVFMG. Topologically, residues 303–346 are cytoplasmic; sequence QDFRERLIHALPASLERALTEDSTQTSDTATNSTLPSAEVALQA. The tract at residues 322–346 is disordered; it reads TEDSTQTSDTATNSTLPSAEVALQA. Residues 323–338 are compositionally biased toward polar residues; the sequence is EDSTQTSDTATNSTLP.

This sequence belongs to the G-protein coupled receptor 1 family. Post-translationally, phosphorylated; which is necessary for desensitization.

The protein resides in the cell membrane. In terms of biological role, high affinity receptor for N-formyl-methionyl peptides (fMLP), which are powerful neutrophil chemotactic factors. Binding of fMLP to the receptor stimulates intracellular calcium mobilization and superoxide anion release. This response is mediated via a G-protein that activates a phosphatidylinositol-calcium second messenger system. Receptor for TAFA4, mediates its effects on chemoattracting macrophages, promoting phagocytosis and increasing ROS release. Receptor for cathepsin CTSG, leading to increased phagocyte chemotaxis. The sequence is that of fMet-Leu-Phe receptor (FPR1) from Pan troglodytes (Chimpanzee).